The following is a 496-amino-acid chain: Aspartyl/glutamyl-tRNA(Asn/Gln) amidotransferase subunit B (496 aa).

Belongs to the GatB/GatE family. GatB subfamily. As to quaternary structure, heterotrimer of A, B and C subunits.

It catalyses the reaction L-glutamyl-tRNA(Gln) + L-glutamine + ATP + H2O = L-glutaminyl-tRNA(Gln) + L-glutamate + ADP + phosphate + H(+). It carries out the reaction L-aspartyl-tRNA(Asn) + L-glutamine + ATP + H2O = L-asparaginyl-tRNA(Asn) + L-glutamate + ADP + phosphate + 2 H(+). Allows the formation of correctly charged Asn-tRNA(Asn) or Gln-tRNA(Gln) through the transamidation of misacylated Asp-tRNA(Asn) or Glu-tRNA(Gln) in organisms which lack either or both of asparaginyl-tRNA or glutaminyl-tRNA synthetases. The reaction takes place in the presence of glutamine and ATP through an activated phospho-Asp-tRNA(Asn) or phospho-Glu-tRNA(Gln). This is Aspartyl/glutamyl-tRNA(Asn/Gln) amidotransferase subunit B from Picosynechococcus sp. (strain ATCC 27264 / PCC 7002 / PR-6) (Agmenellum quadruplicatum).